A 62-amino-acid polypeptide reads, in one-letter code: Large ribosomal subunit protein uL29 (62 aa).

Belongs to the universal ribosomal protein uL29 family.

The polypeptide is Large ribosomal subunit protein uL29 (Cytophaga hutchinsonii (strain ATCC 33406 / DSM 1761 / CIP 103989 / NBRC 15051 / NCIMB 9469 / D465)).